The following is a 321-amino-acid chain: Ras association domain-containing protein 4 (321 aa).

Residues 79–159 form a disordered region; sequence HLPSTSWMPR…RPKCRAPGEA (81 aa). The segment covering 98–110 has biased composition (polar residues); the sequence is SPQNGNITAQGPS. Phosphoserine is present on Ser141. Positions 174–262 constitute a Ras-associating domain; the sequence is YNHKTSVFTP…ARIFLMEADL (89 aa). Positions 270–317 constitute an SARAH domain; that stretch reads VAQYIKFEMPVLDSFVEKLKEEEEREIIKLTMKFQALRLTMLQRLEQL.

Interacts directly with activated KRAS in a GTP-dependent manner. As to expression, widely expressed. Frequently down-regulated in tumor cell lines.

Its function is as follows. Potential tumor suppressor. May act as a KRAS effector protein. May promote apoptosis and cell cycle arrest. This chain is Ras association domain-containing protein 4 (RASSF4), found in Homo sapiens (Human).